Consider the following 319-residue polypeptide: rRNA adenine N-6-methyltransferase (319 aa).

A disordered region spans residues 1–59 (MARAPRSPHPARSRETSRAHPPYGTRADRAPGRGRDRDRSPDSPGNTSSRDGGRSPDRA). The span at 26-41 (RADRAPGRGRDRDRSP) shows a compositional bias: basic and acidic residues. S-adenosyl-L-methionine-binding residues include asparagine 66, leucine 68, glycine 93, glutamate 114, aspartate 141, and asparagine 157.

It belongs to the class I-like SAM-binding methyltransferase superfamily. rRNA adenine N(6)-methyltransferase family.

It carries out the reaction adenosine(2085) in 23S rRNA + 2 S-adenosyl-L-methionine = N(6)-dimethyladenosine(2085) in 23S rRNA + 2 S-adenosyl-L-homocysteine + 2 H(+). Its function is as follows. This protein produces a dimethylation of the adenine residue at position 2085 in 23S rRNA, resulting in reduced affinity between ribosomes and macrolide-lincosamide-streptogramin B antibiotics. This Streptomyces fradiae (Streptomyces roseoflavus) protein is rRNA adenine N-6-methyltransferase (ermSF).